Consider the following 585-residue polypeptide: Organic cation transporter 1 (585 aa).

The Cytoplasmic segment spans residues 1–40; that stretch reads MSFQAMETFAEISQEILMSATKPPDFDFVLEQVGNYGTYQ. The helical transmembrane segment at 41 to 61 threads the bilayer; it reads IVFFFIICLPTSLPSAFSAFN. Topologically, residues 62–155 are extracellular; the sequence is IPFVVGNPPH…LVCDQQAWIE (94 aa). 3 N-linked (GlcNAc...) asparagine glycosylation sites follow: Asn87, Asn98, and Asn133. A helical transmembrane segment spans residues 156–176; the sequence is ISTTSFYVGSFIGNCLFGYVA. Residues 177–184 lie on the Cytoplasmic side of the membrane; it reads DKFGRRRS. Residues 185–205 form a helical membrane-spanning segment; sequence FFVILTVLIVCGTASSFAKDI. At 206–212 the chain is on the extracellular side; sequence ESFIILR. The helical transmembrane segment at 213–233 threads the bilayer; that stretch reads FFTGLAFPALFQIPFIICMEF. Residues 234–243 are Cytoplasmic-facing; sequence MGNSGRIFSG. A helical membrane pass occupies residues 244 to 264; it reads LMTSLFFGAAMALLGVVAMFI. The Extracellular portion of the chain corresponds to 265–269; sequence RRWRQ. The chain crosses the membrane as a helical span at residues 270–290; it reads LTFFCNAPFAFYIIYYFFLPE. Over 291-360 the chain is Cytoplasmic; that stretch reads SPRWSVSVGK…FKTPNLRRKT (70 aa). A helical membrane pass occupies residues 361-381; the sequence is LIVTYIWVMNAIIYNGLTLNV. The Extracellular portion of the chain corresponds to 382–389; it reads SNLPVDDY. The helical transmembrane segment at 390–410 threads the bilayer; the sequence is WSFIINGAVELPGYFVVWPLL. Over 411–416 the chain is Cytoplasmic; that stretch reads QCAGRR. A helical membrane pass occupies residues 417–437; it reads WTLAATMIVCGIGCVSAMFMP. Residues 438-446 lie on the Extracellular side of the membrane; it reads DGYPWLVAS. A helical transmembrane segment spans residues 447–467; it reads ASFIGKFGVGSGFAVIYIFAG. The Cytoplasmic segment spans residues 468 to 476; the sequence is ELYPTVVRA. A helical transmembrane segment spans residues 477–497; that stretch reads IGMGMSSMVAGSGLLLAPHIV. The Extracellular segment spans residues 498 to 504; sequence NLGKIVK. A helical membrane pass occupies residues 505–525; sequence ILPLLIMGLMALSAGILTFFL. Topologically, residues 526 to 585 are cytoplasmic; the sequence is PETLGAPLPMTIEDAENFGKKPEPDSGMFTQAAKKRESQPLLEPHTPMDRRRRSSRLMNI. A disordered region spans residues 544–585; sequence GKKPEPDSGMFTQAAKKRESQPLLEPHTPMDRRRRSSRLMNI. Residues 575–585 show a composition bias toward basic residues; sequence RRRRSSRLMNI.

This sequence belongs to the major facilitator (TC 2.A.1) superfamily. Organic cation transporter (TC 2.A.1.19) family.

The protein resides in the membrane. Functionally, transports organic cations such as tetraethylammonium (TEA). Displays a broad substrate specificity. In Caenorhabditis elegans, this protein is Organic cation transporter 1 (oct-1).